The following is a 95-amino-acid chain: RING finger protein Z (95 aa).

The span at 1-16 (MGNSKSKSNPSSSSES) shows a compositional bias: low complexity. The disordered stretch occupies residues 1–23 (MGNSKSKSNPSSSSESQKGAPTV). Residue Gly2 is the site of N-myristoyl glycine; by host attachment. The segment at 40–76 (CKCCWFADKNLIKCSDHYLCLRCLNVMLKNSDLCNIC) adopts an RING-type; atypical zinc-finger fold. Positions 90–93 (PSAP) match the PTAP/PSAP motif motif.

Belongs to the arenaviridae Z protein family. Interacts with protein NP; this interaction probably directs the encapsidated genome to budding sites. Interacts (via RING domain) with polymerase L; this interaction inhibits viral transcription and replication, Z partially blocks the product exit tunnel for the releasing nascent RNA product. Interacts with the glycoprotein complex; this interaction plays a role in virion budding. Interacts with host eIF4E; this interaction results in eIF4E reduced affinity for its substrate, the 5'-m7 G cap structure. Interacts (via late-budding domain) with host TSG101; this interaction is essential for budding and release of viral particles. Interacts with host RPLP0; this interaction may serve to load ribosome-like particles inside the virion. Interacts with host PML; this interaction induces PML bodies redistribution in the cytoplasm upon viral infection. In terms of processing, myristoylation is required for the role of RING finger protein Z in assembly and budding.

It is found in the virion. Its subcellular location is the host cytoplasm. The protein resides in the host perinuclear region. The protein localises to the host cell membrane. Its function is as follows. Plays a crucial role in virion assembly and budding. Expressed late in the virus life cycle, it acts as an inhibitor of viral transcription and RNA synthesis by interacting with the viral polymerase L. Presumably recruits the NP encapsidated genome to cellular membranes at budding sites via direct interaction with NP. Plays critical roles in the final steps of viral release by interacting with host TSG101, a member of the vacuolar protein-sorting pathway and using other cellular host proteins involved in vesicle formation pathway. The budding of the virus progeny occurs after association of protein Z with the viral glycoprotein complex SSP-GP1-GP2 at the cell periphery, step that requires myristoylation of protein Z. Also selectively represses protein production by associating with host eIF4E. In cell-based minigenome assay, has an inhibitory effect on the ribonucleoprotein machinery (vRNP), which is responsible for the replication and transcription of the viral genome. This chain is RING finger protein Z, found in Guanarito mammarenavirus (isolate Human/Venezuela/NH-95551/1990) (GTOV).